The sequence spans 306 residues: Protein-L-isoaspartate O-methyltransferase 2 (306 aa).

The tract at residues 1–82 (MSTTPPRNKF…ASAATAGGGG (82 aa)) is disordered. Positions 38–48 (PAAPTPAPAKP) are enriched in pro residues. Residues 54–77 (PRTAAPAPAPVPASAVEQRASAAT) are compositionally biased toward low complexity. Serine 142 is a catalytic residue.

Belongs to the methyltransferase superfamily. L-isoaspartyl/D-aspartyl protein methyltransferase family.

The protein localises to the cytoplasm. The enzyme catalyses [protein]-L-isoaspartate + S-adenosyl-L-methionine = [protein]-L-isoaspartate alpha-methyl ester + S-adenosyl-L-homocysteine. In terms of biological role, catalyzes the methyl esterification of L-isoaspartyl residues in peptides and proteins that result from spontaneous decomposition of normal L-aspartyl and L-asparaginyl residues. It plays a role in the repair and/or degradation of damaged proteins. This is Protein-L-isoaspartate O-methyltransferase 2 from Cupriavidus necator (strain ATCC 17699 / DSM 428 / KCTC 22496 / NCIMB 10442 / H16 / Stanier 337) (Ralstonia eutropha).